A 371-amino-acid chain; its full sequence is Phospho-N-acetylmuramoyl-pentapeptide-transferase (371 aa).

The next 9 helical transmembrane spans lie at 19–39, 48–68, 95–115, 119–139, 155–175, 180–200, 227–247, 284–304, and 349–369; these read LYWLLLLCLSGVALATDIYSG, IVAPLWTSTLVVTLLGFWAVP, TMGGIFFMPVALVLGWAWVAA, NLLEVSAAVLLTLCLGLVGWF, AKLRLGIELGSGLIFGLWLFL, ISGLALPFGLSLPIGVLFLAI, AIAFLGLALVVAPSWPGLMIF, AVGLITNTLWALLILSGLFLV, and VVSTFYACVAVLAVAACGLNA.

This sequence belongs to the glycosyltransferase 4 family. MraY subfamily. The cofactor is Mg(2+).

It localises to the cell inner membrane. The catalysed reaction is UDP-N-acetyl-alpha-D-muramoyl-L-alanyl-gamma-D-glutamyl-meso-2,6-diaminopimeloyl-D-alanyl-D-alanine + di-trans,octa-cis-undecaprenyl phosphate = di-trans,octa-cis-undecaprenyl diphospho-N-acetyl-alpha-D-muramoyl-L-alanyl-D-glutamyl-meso-2,6-diaminopimeloyl-D-alanyl-D-alanine + UMP. It functions in the pathway cell wall biogenesis; peptidoglycan biosynthesis. Functionally, catalyzes the initial step of the lipid cycle reactions in the biosynthesis of the cell wall peptidoglycan: transfers peptidoglycan precursor phospho-MurNAc-pentapeptide from UDP-MurNAc-pentapeptide onto the lipid carrier undecaprenyl phosphate, yielding undecaprenyl-pyrophosphoryl-MurNAc-pentapeptide, known as lipid I. The polypeptide is Phospho-N-acetylmuramoyl-pentapeptide-transferase (Acaryochloris marina (strain MBIC 11017)).